Here is a 517-residue protein sequence, read N- to C-terminus: Protein ERGIC-53 (517 aa).

Positions 1 to 30 (MAVSRRRGPQAGAQSFFCALLLSFSQFVGS) are cleaved as a signal peptide. Over 31–484 (DGMGGDAAAP…DLPAFPSCLS (454 aa)) the chain is Lumenal. The L-type lectin-like domain occupies 52 to 275 (RRFEYKYSFK…DVLSFLTFQL (224 aa)). 2 residues coordinate a carbohydrate: serine 96 and aspartate 129. The Ca(2+) site is built by aspartate 160, phenylalanine 162, aspartate 163, asparagine 164, aspartate 165, asparagine 169, and asparagine 170. Residue asparagine 164 coordinates a carbohydrate. Histidine 186 contributes to the a carbohydrate binding site. Aspartate 189 lines the Ca(2+) pocket. Cysteines 198 and 238 form a disulfide. 259 to 261 (GGL) is a binding site for a carbohydrate. 2 disordered regions span residues 276–297 (TEPG…KEKY) and 377–396 (EISR…SQQE). Residues 278–297 (PGKEPPTPEKDISEKEKEKY) are compositionally biased toward basic and acidic residues. The residue at position 433 (serine 433) is a Phosphoserine. A helical membrane pass occupies residues 485–505 (TVHFVIFIVVQTVLFIGYIMY). Topologically, residues 506–517 (RTQQEAAAKKFF) are cytoplasmic. Residues 506–517 (RTQQEAAAKKFF) are mediates interaction with RAB3GAP1, RAB3GAP2 and UBXN6. Positions 516–517 (FF) match the ER export motif motif.

Exists both as a covalent disulfide-linked homohexamer, and a complex of three disulfide-linked dimers non-covalently kept together. Interacts with MCFD2. May interact with TMEM115. Interacts with RAB3GAP1 and RAB3GAP2. Interacts with UBXN6. Interacts with SERPINA1/alpha1-antitrypsin. Interacts with BET1.

The protein resides in the endoplasmic reticulum-Golgi intermediate compartment membrane. The protein localises to the golgi apparatus membrane. It is found in the endoplasmic reticulum membrane. In terms of biological role, mannose-specific lectin. May recognize sugar residues of glycoproteins, glycolipids, or glycosylphosphatidyl inositol anchors and may be involved in the sorting or recycling of proteins, lipids, or both. The LMAN1-MCFD2 complex forms a specific cargo receptor for the ER-to-Golgi transport of selected proteins. The polypeptide is Protein ERGIC-53 (Lman1) (Rattus norvegicus (Rat)).